The sequence spans 66 residues: Large ribosomal subunit protein bL33c (66 aa).

Belongs to the bacterial ribosomal protein bL33 family.

Its subcellular location is the plastid. The protein resides in the chloroplast. This Angiopteris evecta (Mule's foot fern) protein is Large ribosomal subunit protein bL33c.